Reading from the N-terminus, the 126-residue chain is Small ribosomal subunit protein uS8 (126 aa).

The protein belongs to the universal ribosomal protein uS8 family. In terms of assembly, part of the 30S ribosomal subunit. Contacts proteins S5 and S12.

One of the primary rRNA binding proteins, it binds directly to 16S rRNA central domain where it helps coordinate assembly of the platform of the 30S subunit. In Oleidesulfovibrio alaskensis (strain ATCC BAA-1058 / DSM 17464 / G20) (Desulfovibrio alaskensis), this protein is Small ribosomal subunit protein uS8.